The following is a 212-amino-acid chain: Phosphatidylserine decarboxylase proenzyme (212 aa).

Ser-182 functions as the Schiff-base intermediate with substrate; via pyruvic acid in the catalytic mechanism. Position 182 is a pyruvic acid (Ser); by autocatalysis (Ser-182).

The protein belongs to the phosphatidylserine decarboxylase family. PSD-A subfamily. Heterodimer of a large membrane-associated beta subunit and a small pyruvoyl-containing alpha subunit. Requires pyruvate as cofactor. Post-translationally, is synthesized initially as an inactive proenzyme. Formation of the active enzyme involves a self-maturation process in which the active site pyruvoyl group is generated from an internal serine residue via an autocatalytic post-translational modification. Two non-identical subunits are generated from the proenzyme in this reaction, and the pyruvate is formed at the N-terminus of the alpha chain, which is derived from the carboxyl end of the proenzyme. The post-translation cleavage follows an unusual pathway, termed non-hydrolytic serinolysis, in which the side chain hydroxyl group of the serine supplies its oxygen atom to form the C-terminus of the beta chain, while the remainder of the serine residue undergoes an oxidative deamination to produce ammonia and the pyruvoyl prosthetic group on the alpha chain.

The protein localises to the cell membrane. The catalysed reaction is a 1,2-diacyl-sn-glycero-3-phospho-L-serine + H(+) = a 1,2-diacyl-sn-glycero-3-phosphoethanolamine + CO2. It participates in phospholipid metabolism; phosphatidylethanolamine biosynthesis; phosphatidylethanolamine from CDP-diacylglycerol: step 2/2. Its function is as follows. Catalyzes the formation of phosphatidylethanolamine (PtdEtn) from phosphatidylserine (PtdSer). The sequence is that of Phosphatidylserine decarboxylase proenzyme from Chlorobium limicola (strain DSM 245 / NBRC 103803 / 6330).